A 115-amino-acid polypeptide reads, in one-letter code: Large ribosomal subunit protein bL20 (115 aa).

This sequence belongs to the bacterial ribosomal protein bL20 family.

In terms of biological role, binds directly to 23S ribosomal RNA and is necessary for the in vitro assembly process of the 50S ribosomal subunit. It is not involved in the protein synthesizing functions of that subunit. The chain is Large ribosomal subunit protein bL20 from Borrelia hermsii (strain HS1 / DAH).